A 259-amino-acid chain; its full sequence is MELEQREGTMAAVGFEEFSAPPGSELALPPLFGGHILESELETEVEFVSGGLGDSGLRERDEEEEAARGRRRRQRELNRRKYQALGRRCREIEQVNERVLNRLHQVQRITRRLQQERRFLMRVLDSYGDDYRDSQFTIVLEDDGSQGTDVPTPGNVENEPPEKEGLSPPQRTTATLDPSSPAPGEGPSGRKRRRAPRAASSLTPELAPVQVGAEGWGQGVIKVEEDFGFEADEALDSSWVSRGPDKLLPYPTLASPPFD.

2 disordered regions span residues 51-72 and 141-210; these read GLGD…GRRR and EDDG…APVQ. S167 is subject to Phosphoserine. The residue at position 172 (T172) is a Phosphothreonine. S180 and S188 each carry phosphoserine. T203 carries the post-translational modification Phosphothreonine. A Glycyl lysine isopeptide (Lys-Gly) (interchain with G-Cter in SUMO2) cross-link involves residue K222. The tract at residues 240-259 is disordered; it reads VSRGPDKLLPYPTLASPPFD. S255 is modified (phosphoserine).

In terms of assembly, interacts with NOL3; translocates NOL3 into the nucleus and negatively regulated TFPT-induced cell death. Component of the chromatin remodeling INO80 complex; specifically part of a complex module associated with the N-terminus of INO80. Ubiquitously expressed. Abundant in the brain.

It is found in the nucleus. Functionally, appears to promote apoptosis in a p53/TP53-independent manner. In terms of biological role, putative regulatory component of the chromatin remodeling INO80 complex which is involved in transcriptional regulation, DNA replication and probably DNA repair. This chain is TCF3 fusion partner homolog (Tfpt), found in Rattus norvegicus (Rat).